Here is a 467-residue protein sequence, read N- to C-terminus: Proton extrusion protein PxcA (467 aa).

Positions 146 to 161 (SQVRTTSSQPPENPSL) are enriched in polar residues. 2 disordered regions span residues 146-167 (SQVRTTSSQPPENPSLTDALRT) and 186-205 (PQLIKQRTEQSKKSRGKADT). Residues 191–203 (QRTEQSKKSRGKA) are compositionally biased toward basic and acidic residues. 4 helical membrane-spanning segments follow: residues 249-269 (FILLIIIVPLLTHQLSKALIV), 352-372 (IFSVGAFIWLLLVSKPSIMVL), 391-411 (IIILFTDVFVGFHSPHGWEVI), and 427-447 (FIFLFIATFPVILDTIFKYWI).

It belongs to the CemA family.

It localises to the cell inner membrane. Required for H(+) efflux immediately after light irradiation to form a rapid H(+) concentration gradient across the thylakoid membranes. Together with PxcL, contributes to transient H(+) uptake following dark to light transition. This chain is Proton extrusion protein PxcA, found in Nostoc sp. (strain PCC 7120 / SAG 25.82 / UTEX 2576).